Consider the following 520-residue polypeptide: Sodium-dependent dicarboxylate transporter SdcS (520 aa).

The next 14 helical transmembrane spans lie at 30-50 (TGQLIGLILGPLLFLLTLLFF), 55-75 (LPWKGVYVLAITLWIATWWIT), 77-97 (AIPIAATSLLPIVLLPLGHIL), 104-124 (SEYGNDIIFLFLGGFILAIAM), 160-180 (SMFVSNTAAVMIMIPIGLAII), 207-227 (IGYAGTIGGLGTLIGTPPLII), 242-262 (FAKWMIVGIPTVIVLLGITWL), 298-318 (KVVQTIFVLASLLWITREFLL), 323-343 (VTSSVADGTIAIFISILLFII), 362-382 (ELPWGVLILFGGGLALAKGIS), 399-419 (GVSPILIVIVITIFVLFLTEV), 428-448 (MILPILATLSVAVGVHPLLLM), 452-472 (AMAANCAYMLPVGTPPNAIIF), and 491-511 (LISAIIIILVVYYIMPIVLGI).

Belongs to the SLC13A/DASS transporter (TC 2.A.47) family. NADC subfamily.

The protein localises to the cell membrane. Its function is as follows. Mediates the transport of the dicarboxylates fumarate, malate, and succinate across the cytoplasmic membrane via a Na(+)-electrochemical gradient. This Staphylococcus aureus (strain MRSA252) protein is Sodium-dependent dicarboxylate transporter SdcS (sdcS).